The following is a 1231-amino-acid chain: Chromosome-associated kinesin KIF4 (1231 aa).

The Kinesin motor domain occupies 9 to 337; it reads PVRVALRCRP…LRYADRARKI (329 aa). 88–95 contacts ATP; sequence GQTGSGKT. Positions 351 to 1000 form a coiled coil; the sequence is ELNHLKQQVQ…IKQKLTLLQV (650 aa). S395 is modified (phosphoserine). Residue T800 is modified to Phosphothreonine. S802, S811, and S816 each carry phosphoserine. The segment at 1001-1231 is globular; that stretch reads ASKQKPHLTR…GCSPIQEESH (231 aa). The interval 1189-1212 is disordered; it reads HPELKSIASESQENKAIGKKKKRA. Phosphoserine occurs at positions 1224 and 1230.

Belongs to the TRAFAC class myosin-kinesin ATPase superfamily. Kinesin family. Chromokinesin subfamily. The cofactor is [2Fe-2S] cluster. It depends on [4Fe-4S] cluster as a cofactor. Expressed in pyramidal cells in juvenile hippocampus, granular cells in juvenile cerebellar cortex and in adult spleen.

It is found in the nucleus. The protein resides in the chromosome. Its subcellular location is the cytoplasm. The protein localises to the cytoskeleton. Its function is as follows. Iron-sulfur (Fe-S) cluster binding motor protein that has a role in chromosome segregation during mitosis. Required for mitotic chromosomal positioning and bipolar spindle stabilization. The protein is Chromosome-associated kinesin KIF4 (Kif4) of Mus musculus (Mouse).